The chain runs to 210 residues: Protein GrpE (210 aa).

The segment at 1 to 42 (MANEERTIPETNVASERPEDPVESQTRAEGGEQIQEAAPETA) is disordered.

The protein belongs to the GrpE family. In terms of assembly, homodimer.

The protein localises to the cytoplasm. Participates actively in the response to hyperosmotic and heat shock by preventing the aggregation of stress-denatured proteins, in association with DnaK and GrpE. It is the nucleotide exchange factor for DnaK and may function as a thermosensor. Unfolded proteins bind initially to DnaJ; upon interaction with the DnaJ-bound protein, DnaK hydrolyzes its bound ATP, resulting in the formation of a stable complex. GrpE releases ADP from DnaK; ATP binding to DnaK triggers the release of the substrate protein, thus completing the reaction cycle. Several rounds of ATP-dependent interactions between DnaJ, DnaK and GrpE are required for fully efficient folding. The protein is Protein GrpE of Nitrosococcus oceani (strain ATCC 19707 / BCRC 17464 / JCM 30415 / NCIMB 11848 / C-107).